We begin with the raw amino-acid sequence, 35 residues long: Conotoxin Ca15a (35 aa).

Pro8 is subject to 4-hydroxyproline.

Post-translationally, contains 4 disulfide bonds. In terms of tissue distribution, expressed by the venom duct.

Its subcellular location is the secreted. In Conus caracteristicus (Characteristic cone), this protein is Conotoxin Ca15a.